The primary structure comprises 232 residues: 2-C-methyl-D-erythritol 4-phosphate cytidylyltransferase (232 aa).

Belongs to the IspD/TarI cytidylyltransferase family. IspD subfamily.

The catalysed reaction is 2-C-methyl-D-erythritol 4-phosphate + CTP + H(+) = 4-CDP-2-C-methyl-D-erythritol + diphosphate. The protein operates within isoprenoid biosynthesis; isopentenyl diphosphate biosynthesis via DXP pathway; isopentenyl diphosphate from 1-deoxy-D-xylulose 5-phosphate: step 2/6. In terms of biological role, catalyzes the formation of 4-diphosphocytidyl-2-C-methyl-D-erythritol from CTP and 2-C-methyl-D-erythritol 4-phosphate (MEP). This chain is 2-C-methyl-D-erythritol 4-phosphate cytidylyltransferase, found in Shewanella frigidimarina (strain NCIMB 400).